The sequence spans 559 residues: TBC1 domain family member 24 (559 aa).

Residues lysine 36, arginine 40, lysine 238, arginine 242, and 293–297 (RLFSR) each bind a 1,2-diacyl-sn-glycero-3-phospho-(1D-myo-inositol). Residues 47 to 262 (SHALRGKVYQ…KVRAGQPLES (216 aa)) form the Rab-GAP TBC domain. One can recognise a TLDc domain in the interval 343–554 (EIVSVREMRD…IAAVEAWGFQ (212 aa)). 2 positions are modified to phosphoserine: serine 473 and serine 480.

Interacts with ARF6. Highest expression in brain.

It localises to the cell membrane. It is found in the cytoplasm. Its subcellular location is the cytoplasmic vesicle membrane. The protein resides in the presynapse. Functionally, may act as a GTPase-activating protein for Rab family protein(s). Involved in neuronal projections development, probably through a negative modulation of ARF6 function. Involved in the regulation of synaptic vesicle trafficking. The chain is TBC1 domain family member 24 (TBC1D24) from Homo sapiens (Human).